The chain runs to 481 residues: 3-isopropylmalate dehydratase large subunit (481 aa).

3 residues coordinate [4Fe-4S] cluster: Cys-357, Cys-417, and Cys-420.

It belongs to the aconitase/IPM isomerase family. LeuC type 1 subfamily. Heterodimer of LeuC and LeuD. [4Fe-4S] cluster is required as a cofactor.

It carries out the reaction (2R,3S)-3-isopropylmalate = (2S)-2-isopropylmalate. Its pathway is amino-acid biosynthesis; L-leucine biosynthesis; L-leucine from 3-methyl-2-oxobutanoate: step 2/4. In terms of biological role, catalyzes the isomerization between 2-isopropylmalate and 3-isopropylmalate, via the formation of 2-isopropylmaleate. The sequence is that of 3-isopropylmalate dehydratase large subunit from Mycolicibacterium vanbaalenii (strain DSM 7251 / JCM 13017 / BCRC 16820 / KCTC 9966 / NRRL B-24157 / PYR-1) (Mycobacterium vanbaalenii).